We begin with the raw amino-acid sequence, 824 residues long: Spindle-defective protein 2 (824 aa).

Acidic residues-rich tracts occupy residues 16-27 (EIEDSPIDDNDN) and 35-44 (GDVELEEEEV). Residues 16-98 (EIEDSPIDDN…SRPASVMSDK (83 aa)) form a disordered region. The span at 59–70 (TNMTNPKVNDLT) shows a compositional bias: polar residues. A compositionally biased stretch (low complexity) spans 81 to 98 (SAASSRSASRPASVMSDK). A coiled-coil region spans residues 111–131 (ENAIEEYTNQVFADENKADLL). A disordered region spans residues 189 to 252 (RAKPGANDNE…GQYQGPNFDL (64 aa)). Over residues 207–225 (NVPTTSDKSAFITSPMNST) the composition is skewed to polar residues. The stretch at 304 to 324 (NNKNQDLFAALEEARKRRAAQ) forms a coiled coil. Disordered regions lie at residues 342–372 (KPTS…LTTS) and 433–455 (NNGN…VRTM). The segment covering 349-366 (SGNVVSSTSNDNTTAASS) has biased composition (low complexity).

As to quaternary structure, interacts with sas-7 (via C-terminus); may be recruited to centrioles by sas-7.

The protein localises to the cytoplasm. Its subcellular location is the cytoskeleton. It localises to the microtubule organizing center. The protein resides in the centrosome. It is found in the centriole. Required both for centrosome duplication and maturation. Required for pericentriolar material (PCM) recruitment. This Caenorhabditis elegans protein is Spindle-defective protein 2.